The chain runs to 180 residues: Trafficking protein particle complex subunit 3 (180 aa).

Residue C68 is the site of S-palmitoyl cysteine attachment.

This sequence belongs to the TRAPP small subunits family. BET3 subfamily. As to quaternary structure, homodimer. Component of the multisubunit transport protein particle (TRAPP) complex, which includes at least TRAPPC2, TRAPPC2L, TRAPPC3, TRAPPC3L, TRAPPC4, TRAPPC5, TRAPPC8, TRAPPC9, TRAPPC10, TRAPPC11 and TRAPPC12. Heterodimer with TRAPPC6A. The heterodimer TRAPPC3-TRAPPC6A interacts with TRAPPC2L. Heterodimer with TRAPPC6b. The heterodimer TRAPPC6B-TRAPPC3 interacts with TRAPPC1 likely providing a core for TRAPP complex formation. As to expression, widely expressed. Expressed in lung, heart, liver, spleen, brain and kidney.

The protein resides in the golgi apparatus. It localises to the cis-Golgi network. The protein localises to the endoplasmic reticulum. In terms of biological role, may play a role in vesicular transport from endoplasmic reticulum to Golgi. The protein is Trafficking protein particle complex subunit 3 of Mus musculus (Mouse).